Consider the following 582-residue polypeptide: Hemagglutinin-neuraminidase (582 aa).

A helical membrane pass occupies residues 35–55 (ILVLSVQAVTLILVIVNLGEL). Disulfide bonds link Cys-178–Cys-202, Cys-192–Cys-253, and Cys-244–Cys-257. Asn-284 and Asn-329 each carry an N-linked (GlcNAc...) asparagine; by host glycan. 3 disulfides stabilise this stretch: Cys-350–Cys-471, Cys-382–Cys-392, and Cys-465–Cys-475. 2 N-linked (GlcNAc...) asparagine; by host glycosylation sites follow: Asn-400 and Asn-448. A glycan (N-linked (GlcNAc...) asparagine; by host) is linked at Asn-507. An intrachain disulfide couples Cys-545 to Cys-556.

The protein belongs to the paramyxoviruses hemagglutinin-neuraminidase family. Homotetramer; composed of disulfide-linked homodimers. Interacts with F protein trimer.

It is found in the virion membrane. The protein localises to the host cell membrane. It carries out the reaction Hydrolysis of alpha-(2-&gt;3)-, alpha-(2-&gt;6)-, alpha-(2-&gt;8)- glycosidic linkages of terminal sialic acid residues in oligosaccharides, glycoproteins, glycolipids, colominic acid and synthetic substrates.. Functionally, attaches the virus to alpha-2,3-linked sialic acid-containing cell receptors and thereby initiating infection. Binding of HN protein to the receptor induces a conformational change that allows the F protein to trigger virion/cell membranes fusion. Binds to the glycan motifs sialyl Lewis (SLe) and GM2 ganglioside (GM2-glycan). In terms of biological role, neuraminidase activity ensures the efficient spread of the virus by dissociating the mature virions from the neuraminic acid containing glycoproteins. This Homo sapiens (Human) protein is Hemagglutinin-neuraminidase (HN).